We begin with the raw amino-acid sequence, 197 residues long: Thymidine kinase (197 aa).

Residues S9 to T16 and D87 to H90 contribute to the ATP site. The active-site Proton acceptor is E88. Residues C145, C147, C187, and H190 each coordinate Zn(2+).

It belongs to the thymidine kinase family. As to quaternary structure, homotetramer.

It is found in the cytoplasm. It carries out the reaction thymidine + ATP = dTMP + ADP + H(+). The chain is Thymidine kinase from Francisella tularensis subsp. holarctica (strain LVS).